The following is a 321-amino-acid chain: Glutaminase (321 aa).

Substrate contacts are provided by Ser-69, Asn-120, Glu-165, Asn-172, Tyr-196, Tyr-248, and Val-266.

Belongs to the glutaminase family. Homotetramer.

The catalysed reaction is L-glutamine + H2O = L-glutamate + NH4(+). In Parabacteroides distasonis (strain ATCC 8503 / DSM 20701 / CIP 104284 / JCM 5825 / NCTC 11152), this protein is Glutaminase.